The primary structure comprises 591 residues: L-fucose isomerase (591 aa).

Catalysis depends on proton acceptor residues glutamate 337 and aspartate 361. Positions 337, 361, and 528 each coordinate Mn(2+).

Belongs to the L-fucose isomerase family. Homohexamer. The cofactor is Mn(2+).

Its subcellular location is the cytoplasm. It carries out the reaction L-fucose = L-fuculose. The protein operates within carbohydrate degradation; L-fucose degradation; L-lactaldehyde and glycerone phosphate from L-fucose: step 1/3. Its function is as follows. Converts the aldose L-fucose into the corresponding ketose L-fuculose. The protein is L-fucose isomerase of Escherichia coli O17:K52:H18 (strain UMN026 / ExPEC).